The sequence spans 589 residues: O-fucosyltransferase 11 (589 aa).

Residues 1–37 (MKSKIHHQPNGSNNGVVSSNDNGCRSESPSPPLSPNR) form a disordered region. Over residues 10–23 (NGSNNGVVSSNDNG) the composition is skewed to low complexity. The helical; Signal-anchor for type II membrane protein transmembrane segment at 68–88 (MIYASGLLMCVGPFSGLVGWV) threads the bilayer. 3 N-linked (GlcNAc...) asparagine glycosylation sites follow: Asn-112, Asn-136, and Asn-239. 332-334 (HLR) lines the substrate pocket. N-linked (GlcNAc...) asparagine glycans are attached at residues Asn-405, Asn-406, and Asn-564.

Belongs to the glycosyltransferase GT106 family.

It is found in the membrane. Its pathway is glycan metabolism. This Arabidopsis thaliana (Mouse-ear cress) protein is O-fucosyltransferase 11.